The primary structure comprises 288 residues: 4-diphosphocytidyl-2-C-methyl-D-erythritol kinase (288 aa).

The active site involves lysine 11. An ATP-binding site is contributed by 93 to 103 (PFGAGLGGGSS). Aspartate 135 is an active-site residue.

The protein belongs to the GHMP kinase family. IspE subfamily.

The enzyme catalyses 4-CDP-2-C-methyl-D-erythritol + ATP = 4-CDP-2-C-methyl-D-erythritol 2-phosphate + ADP + H(+). It participates in isoprenoid biosynthesis; isopentenyl diphosphate biosynthesis via DXP pathway; isopentenyl diphosphate from 1-deoxy-D-xylulose 5-phosphate: step 3/6. Functionally, catalyzes the phosphorylation of the position 2 hydroxy group of 4-diphosphocytidyl-2C-methyl-D-erythritol. The protein is 4-diphosphocytidyl-2-C-methyl-D-erythritol kinase of Chlorobium limicola (strain DSM 245 / NBRC 103803 / 6330).